Reading from the N-terminus, the 315-residue chain is Acetyl-coenzyme A carboxylase carboxyl transferase subunit alpha (315 aa).

A CoA carboxyltransferase C-terminal domain is found at 36 to 289 (LGKKRLELME…RKAVAAELKV (254 aa)).

It belongs to the AccA family. Acetyl-CoA carboxylase is a heterohexamer composed of biotin carboxyl carrier protein (AccB), biotin carboxylase (AccC) and two subunits each of ACCase subunit alpha (AccA) and ACCase subunit beta (AccD).

It localises to the cytoplasm. The enzyme catalyses N(6)-carboxybiotinyl-L-lysyl-[protein] + acetyl-CoA = N(6)-biotinyl-L-lysyl-[protein] + malonyl-CoA. Its pathway is lipid metabolism; malonyl-CoA biosynthesis; malonyl-CoA from acetyl-CoA: step 1/1. Functionally, component of the acetyl coenzyme A carboxylase (ACC) complex. First, biotin carboxylase catalyzes the carboxylation of biotin on its carrier protein (BCCP) and then the CO(2) group is transferred by the carboxyltransferase to acetyl-CoA to form malonyl-CoA. The chain is Acetyl-coenzyme A carboxylase carboxyl transferase subunit alpha from Francisella philomiragia subsp. philomiragia (strain ATCC 25017 / CCUG 19701 / FSC 153 / O#319-036).